The primary structure comprises 423 residues: MDLRATSSNDSNATSGYSDTAAVDWDEGENATGSGSLPDPELSYQIITSLFLGALILCSIFGNSCVVAAIALERSLQNVANYLIGSLAVTDLMVSVLVLPMAALYQVLNKWTLGQDICDLFIALDVLCCTSSILHLCAIALDRYWAITDPIDYVNKRTPRRAAVLISVTWLIGFSISIPPMLGWRSAEDRANPDACIISQDPGYTIYSTFGAFYIPLILMLVLYGRIFKAARFRIRKTVKKTEKAKASDMCLTLSPAVFHKRANGDAVSAEWKRGYKFKPSSPCANGAVRHGEEMESLEIIEVNSNSKTHLPLPNTPQSSSHENINEKTTGTRRKIALARERKTVKTLGIIMGTFIFCWLPFFIVALVLPFCAENCYMPEWLGAVINWLGYSNSLLNPIIYAYFNKDFQSAFKKILRCKFHRH.

Topologically, residues 1-47 (MDLRATSSNDSNATSGYSDTAAVDWDEGENATGSGSLPDPELSYQII) are extracellular. N-linked (GlcNAc...) asparagine glycans are attached at residues asparagine 9, asparagine 12, and asparagine 30. The helical transmembrane segment at 48-68 (TSLFLGALILCSIFGNSCVVA) threads the bilayer. Residues 69 to 82 (AIALERSLQNVANY) are Cytoplasmic-facing. The chain crosses the membrane as a helical span at residues 83-107 (LIGSLAVTDLMVSVLVLPMAALYQV). Residues 108–116 (LNKWTLGQD) lie on the Extracellular side of the membrane. Residues 117–141 (ICDLFIALDVLCCTSSILHLCAIAL) form a helical membrane-spanning segment. A disulfide bridge links cysteine 118 with cysteine 196. Serotonin is bound by residues aspartate 125 and cysteine 129. The short motif at 142 to 144 (DRY) is the DRY motif; important for ligand-induced conformation changes element. Topologically, residues 142 to 161 (DRYWAITDPIDYVNKRTPRR) are cytoplasmic. Residues 162 to 183 (AAVLISVTWLIGFSISIPPMLG) form a helical membrane-spanning segment. At 184–202 (WRSAEDRANPDACIISQDP) the chain is on the extracellular side. The helical transmembrane segment at 203–225 (GYTIYSTFGAFYIPLILMLVLYG) threads the bilayer. Over 226–347 (RIFKAARFRI…LARERKTVKT (122 aa)) the chain is Cytoplasmic. Positions 311–332 (LPLPNTPQSSSHENINEKTTGT) are disordered. Polar residues predominate over residues 316–329 (TPQSSSHENINEKT). Residues serine 320, lysine 346, threonine 347, and glycine 353 each coordinate 1D-myo-inositol 4-phosphate. Residues 348-371 (LGIIMGTFIFCWLPFFIVALVLPF) form a helical membrane-spanning segment. Residues 372–379 (CAENCYMP) are Extracellular-facing. Residues 380–404 (EWLGAVINWLGYSNSLLNPIIYAYF) form a helical membrane-spanning segment. An NPxxY motif; important for ligand-induced conformation changes and signaling motif is present at residues 397 to 401 (NPIIY). Phenylalanine 404, asparagine 405, and lysine 406 together coordinate 1D-myo-inositol 4-phosphate. The Cytoplasmic segment spans residues 405-423 (NKDFQSAFKKILRCKFHRH).

Belongs to the G-protein coupled receptor 1 family. 5-hydroxytryptamine receptor subfamily.

It localises to the cell membrane. G-protein coupled receptor activity is regulated by lipids: phosphatidylinositol 4-phosphate increases HTR1A-mediated activity. Functionally, G-protein coupled receptor for 5-hydroxytryptamine (serotonin). Also functions as a receptor for various drugs and psychoactive substances. Ligand binding causes a conformation change that triggers signaling via guanine nucleotide-binding proteins (G proteins) and modulates the activity of downstream effectors, such as adenylate cyclase. HTR1A is coupled to G(i)/G(o) G alpha proteins and mediates inhibitory neurotransmission: signaling inhibits adenylate cyclase activity and activates a phosphatidylinositol-calcium second messenger system that regulates the release of Ca(2+) ions from intracellular stores. Beta-arrestin family members regulate signaling by mediating both receptor desensitization and resensitization processes. The protein is 5-hydroxytryptamine receptor 1A-alpha (htr1aa) of Takifugu rubripes (Japanese pufferfish).